Here is a 175-residue protein sequence, read N- to C-terminus: Threonylcarbamoyl-AMP synthase (175 aa).

One can recognise a YrdC-like domain in the interval 1 to 175 (MLHNDDVIAY…IINGKLIRYV (175 aa)).

This sequence belongs to the SUA5 family. TsaC subfamily.

Its subcellular location is the cytoplasm. It carries out the reaction L-threonine + hydrogencarbonate + ATP = L-threonylcarbamoyladenylate + diphosphate + H2O. Required for the formation of a threonylcarbamoyl group on adenosine at position 37 (t(6)A37) in tRNAs that read codons beginning with adenine. Catalyzes the conversion of L-threonine, HCO(3)(-)/CO(2) and ATP to give threonylcarbamoyl-AMP (TC-AMP) as the acyladenylate intermediate, with the release of diphosphate. The protein is Threonylcarbamoyl-AMP synthase of Buchnera aphidicola subsp. Acyrthosiphon pisum (strain APS) (Acyrthosiphon pisum symbiotic bacterium).